The chain runs to 275 residues: Phosphatidylglycerol--prolipoprotein diacylglyceryl transferase (275 aa).

3 consecutive transmembrane segments (helical) span residues 18–38, 55–75, and 89–109; these read IEVH…YFIA, IIFW…VIFQ, and IWHG…TGVI. Arg-137 is a binding site for a 1,2-diacyl-sn-glycero-3-phospho-(1'-sn-glycerol). The next 2 helical transmembrane spans lie at 203–223 and 235–255; these read IGET…FVEG and IRVA…MIIY.

Belongs to the Lgt family.

Its subcellular location is the cell membrane. It carries out the reaction L-cysteinyl-[prolipoprotein] + a 1,2-diacyl-sn-glycero-3-phospho-(1'-sn-glycerol) = an S-1,2-diacyl-sn-glyceryl-L-cysteinyl-[prolipoprotein] + sn-glycerol 1-phosphate + H(+). It participates in protein modification; lipoprotein biosynthesis (diacylglyceryl transfer). Catalyzes the transfer of the diacylglyceryl group from phosphatidylglycerol to the sulfhydryl group of the N-terminal cysteine of a prolipoprotein, the first step in the formation of mature lipoproteins. The polypeptide is Phosphatidylglycerol--prolipoprotein diacylglyceryl transferase (Staphylococcus carnosus (strain TM300)).